The chain runs to 188 residues: MKKIGVLAIQGAVDEHIQMIESAGALAFKVKHSNDLAGLDGLVLPGGESTTMRKIMKRYDLMEPVKAFAKEGKAIFGTCAGLVLLSKEIEGGEESLGLLDATAIRNGFGRQKESFEAELSVDVFDAPTFEAIFIRAPYLIEPSDEVTVLATIDGKIVAAKQANILVTAFHPELTNDNRWMRYFLEKIL.

47 to 49 is an L-glutamine binding site; it reads GES. Catalysis depends on Cys79, which acts as the Nucleophile. L-glutamine-binding positions include Arg105 and 134–135; that span reads IR. Active-site charge relay system residues include His170 and Glu172.

The protein belongs to the glutaminase PdxT/SNO family. In the presence of PdxS, forms a dodecamer of heterodimers. Only shows activity in the heterodimer.

It carries out the reaction aldehydo-D-ribose 5-phosphate + D-glyceraldehyde 3-phosphate + L-glutamine = pyridoxal 5'-phosphate + L-glutamate + phosphate + 3 H2O + H(+). The catalysed reaction is L-glutamine + H2O = L-glutamate + NH4(+). It functions in the pathway cofactor biosynthesis; pyridoxal 5'-phosphate biosynthesis. Catalyzes the hydrolysis of glutamine to glutamate and ammonia as part of the biosynthesis of pyridoxal 5'-phosphate. The resulting ammonia molecule is channeled to the active site of PdxS. This chain is Pyridoxal 5'-phosphate synthase subunit PdxT, found in Listeria monocytogenes serotype 4a (strain HCC23).